The chain runs to 1001 residues: Receptor-type tyrosine-protein phosphatase N2 (1001 aa).

A signal peptide spans 1–27 (MGPPLPLLLLLLLPPPLPRALPAPASA). The involved in localization to secretory granules; interaction with CPE stretch occupies residues 1-407 (MGPPLPLLLL…PEGPLLEKSS (407 aa)). At 28-600 (RGRQLPGRLG…HQEEQEDSTK (573 aa)) the chain is on the extracellular side. An Omega-N-methylarginine modification is found at R259. Disordered stretches follow at residues 271-296 (PFSA…SMDD), 308-359 (QQNS…DAPE), and 394-459 (SPLL…LEDQ). A compositionally biased stretch (basic and acidic residues) spans 312-325 (EVDRLGPLKEEKAD). S339 bears the Phosphoserine mark. The segment covering 340–355 (QESHGRGAEGQPREQT) has biased composition (basic and acidic residues). Residues 394-404 (SPLLPEGPLLE) show a composition bias toward low complexity. Residues 405–416 (KSSREEIKKSEQ) are compositionally biased toward basic and acidic residues. Over residues 417–428 (PEEVLSSEEETA) the composition is skewed to acidic residues. Phosphoserine occurs at positions 422 and 423. A compositionally biased stretch (basic and acidic residues) spans 429–459 (GVEHVRSRTYSKDLFERKPNSEPQPRRLEDQ). N550 carries N-linked (GlcNAc...) asparagine glycosylation. Residues 601–621 (FILLTFLSIACILGVLLASSL) form a helical membrane-spanning segment. The Cytoplasmic segment spans residues 622–1001 (AYCLRHNSHY…VNAILKALPQ (380 aa)). The Tyrosine-based internalization motif signature appears at 652-661 (YQELCRQRMA). The disordered stretch occupies residues 663–705 (RPQDRSEGPHTSRINSVSSQFSDGPMPSPSARSSTSSWSEEPV). Positions 674 to 684 (SRINSVSSQFS) are enriched in polar residues. 2 positions are modified to phosphoserine: S678 and S684. Residues 691–705 (PSARSSTSSWSEEPV) show a composition bias toward low complexity. Position 697 is a phosphothreonine (T697). The 261-residue stretch at 731 to 991 (LEKEWEALCA…EFALTAVAEE (261 aa)) folds into the Tyrosine-protein phosphatase domain. Substrate is bound by residues D899 and 931–937 (CSDGAGR). The active-site Phosphocysteine intermediate is the C931. The residue at position 956 (K956) is an N6-acetyllysine. Q976 contacts substrate. The short motif at 990-996 (EEVNAIL) is the Leucine-based sorting signal element.

It belongs to the protein-tyrosine phosphatase family. In terms of assembly, self-associates. Interacts (via cytoplasmic domain) with PTPRN (via cytoplasmic domain). Interacts (precursor form) with CPE. Interacts with HAP1 isoform A. Interacts with AP2A1 or AP2A2 and AP1G1; indicative for an association with adaptor protein complex 2 (AP-2) and adaptor protein complex 1 (AP-1). Interacts with AP2M1; indicative for an association with adaptor protein complex 2 (AP-2). Interacts with MYO5A. Post-translationally, subject to proteolytic cleavage at multiple sites during maturation of secretory granules. In the brain at least IA-2beta71, IA-2beta64 and IA-2beta60 have been detected, in the pancreas and a pancreatic beta cell line only IA-2beta60 has been detected. Detected in brain. Detected in pancreas islets (at protein level). Detected in pancreas and brain.

Its subcellular location is the cytoplasmic vesicle. It is found in the secretory vesicle membrane. The protein localises to the secretory vesicle. The protein resides in the synaptic vesicle membrane. The catalysed reaction is O-phospho-L-tyrosyl-[protein] + H2O = L-tyrosyl-[protein] + phosphate. Its function is as follows. Plays a role in vesicle-mediated secretory processes. Required for normal accumulation of secretory vesicles in hippocampus, pituitary and pancreatic islets. Required for the accumulation of normal levels of insulin-containing vesicles and preventing their degradation. Plays a role in insulin secretion in response to glucose stimuli. Required for normal accumulation of the neurotransmitters norepinephrine, dopamine and serotonin in the brain. In females, but not in males, required for normal accumulation and secretion of pituitary hormones, such as luteinizing hormone (LH) and follicle-stimulating hormone (FSH). Required to maintain normal levels of renin expression and renin release. May regulate catalytic active protein-tyrosine phosphatases such as PTPRA through dimerization. Has phosphatidylinositol phosphatase activity; the PIPase activity is involved in its ability to regulate insulin secretion. Can dephosphorylate phosphatidylinositol 4,5-biphosphate (PI(4,5)P2), phosphatidylinositol 5-phosphate and phosphatidylinositol 3-phosphate. Regulates PI(4,5)P2 level in the plasma membrane and localization of cofilin at the plasma membrane and thus is indirectly involved in regulation of actin dynamics related to cell migration and metastasis; upon hydrolysis of PI(4,5)P2 cofilin is released from the plasma membrane and acts in the cytoplasm in severing F-actin filaments. The polypeptide is Receptor-type tyrosine-protein phosphatase N2 (Ptprn2) (Mus musculus (Mouse)).